A 220-amino-acid chain; its full sequence is Ribosomal RNA small subunit methyltransferase Nep1 (220 aa).

Residues G178, G183, and 196–201 (IYKEPL) each bind S-adenosyl-L-methionine.

The protein belongs to the class IV-like SAM-binding methyltransferase superfamily. RNA methyltransferase NEP1 family. As to quaternary structure, homodimer.

It carries out the reaction a pseudouridine in rRNA + S-adenosyl-L-methionine = an N(1)-methylpseudouridine in rRNA + S-adenosyl-L-homocysteine + H(+). Its function is as follows. Methyltransferase involved in ribosomal biogenesis. Specifically catalyzes the N1-methylation of the pseudouridine corresponding to position 914 in M.jannaschii 16S rRNA. This Thermococcus sibiricus (strain DSM 12597 / MM 739) protein is Ribosomal RNA small subunit methyltransferase Nep1.